A 491-amino-acid chain; its full sequence is ATP synthase subunit beta, chloroplastic (491 aa).

Residue 163–170 (GGAGVGKT) participates in ATP binding.

It belongs to the ATPase alpha/beta chains family. As to quaternary structure, F-type ATPases have 2 components, CF(1) - the catalytic core - and CF(0) - the membrane proton channel. CF(1) has five subunits: alpha(3), beta(3), gamma(1), delta(1), epsilon(1). CF(0) has four main subunits: a(1), b(1), b'(1) and c(9-12).

Its subcellular location is the plastid. The protein resides in the chloroplast thylakoid membrane. The catalysed reaction is ATP + H2O + 4 H(+)(in) = ADP + phosphate + 5 H(+)(out). In terms of biological role, produces ATP from ADP in the presence of a proton gradient across the membrane. The catalytic sites are hosted primarily by the beta subunits. This chain is ATP synthase subunit beta, chloroplastic, found in Nephroselmis olivacea (Green alga).